The chain runs to 93 residues: UPF0298 protein lwe2074 (93 aa).

It belongs to the UPF0298 family.

The protein resides in the cytoplasm. This Listeria welshimeri serovar 6b (strain ATCC 35897 / DSM 20650 / CCUG 15529 / CIP 8149 / NCTC 11857 / SLCC 5334 / V8) protein is UPF0298 protein lwe2074.